The following is a 96-amino-acid chain: MEQAPENQGPQREPYNEWTLELLEELKSEAVRHFPRIWLHSLGQHIYKTYGDTWTGVEALIRILQQLLFIHFRIGCQHSRIGITRQRRARNGASRS.

Residues 1-42 (MEQAPENQGPQREPYNEWTLELLEELKSEAVRHFPRIWLHSL) form a homooligomerization region. Ser79, Ser94, and Ser96 each carry phosphoserine; by host.

This sequence belongs to the HIV-1 VPR protein family. In terms of assembly, homooligomer, may form homodimer. Interacts with p6-gag region of the Pr55 Gag precursor protein through a (Leu-X-X)4 motif near the C-terminus of the P6gag protein. Interacts with host UNG. May interact with host RAD23A/HHR23A. Interacts with host VPRBP/DCAF1, leading to hijack the CUL4A-RBX1-DDB1-DCAF1/VPRBP complex, mediating ubiquitination of host proteins such as TERT and ZGPAT and arrest of the cell cycle in G2 phase. Phosphorylated on several residues by host. These phosphorylations regulate VPR activity for the nuclear import of the HIV-1 pre-integration complex.

The protein localises to the virion. It is found in the host nucleus. It localises to the host extracellular space. In terms of biological role, during virus replication, may deplete host UNG protein, and incude G2-M cell cycle arrest. Acts by targeting specific host proteins for degradation by the 26S proteasome, through association with the cellular CUL4A-DDB1 E3 ligase complex by direct interaction with host VPRPB/DCAF-1. Cell cycle arrest reportedly occurs within hours of infection and is not blocked by antiviral agents, suggesting that it is initiated by the VPR carried into the virion. Additionally, VPR induces apoptosis in a cell cycle dependent manner suggesting that these two effects are mechanistically linked. Detected in the serum and cerebrospinal fluid of AIDS patient, VPR may also induce cell death to bystander cells. Its function is as follows. During virus entry, plays a role in the transport of the viral pre-integration (PIC) complex to the host nucleus. This function is crucial for viral infection of non-dividing macrophages. May act directly at the nuclear pore complex, by binding nucleoporins phenylalanine-glycine (FG)-repeat regions. The sequence is that of Protein Vpr from Human immunodeficiency virus type 1 group M subtype B (isolate SF33) (HIV-1).